Reading from the N-terminus, the 319-residue chain is Cutinase cut1 (319 aa).

The first 58 residues, 1–58, serve as a signal peptide directing secretion; that stretch reads MPPHAARPGPAQNRRGRAMAVITPRRERSSLLSRALRFTAAAATALVTAVSLAAPAHA. Tyrosine 118 provides a ligand contact to poly(ethylene terephthalate). Serine 188 serves as the catalytic Nucleophile. 2 residues coordinate poly(ethylene terephthalate): methionine 189 and tryptophan 213. Catalysis depends on charge relay system residues aspartate 234 and histidine 266. The cysteines at positions 299 and 317 are disulfide-linked.

It belongs to the AB hydrolase superfamily.

It is found in the secreted. It localises to the periplasm. The catalysed reaction is an acetyl ester + H2O = an aliphatic alcohol + acetate + H(+). It carries out the reaction a butanoate ester + H2O = an aliphatic alcohol + butanoate + H(+). It catalyses the reaction pentanoate ester + H2O = pentanoate + an aliphatic alcohol + H(+). The enzyme catalyses an octanoate ester + H2O = an aliphatic alcohol + octanoate + H(+). The catalysed reaction is decanoate ester + H2O = decanoate + an aliphatic alcohol + H(+). It carries out the reaction a dodecanoate ester + H2O = an aliphatic alcohol + dodecanoate + H(+). It catalyses the reaction a tetradecanoate ester + H2O = an aliphatic alcohol + tetradecanoate + H(+). The enzyme catalyses hexadecanoate ester + H2O = an aliphatic alcohol + hexadecanoate + H(+). The catalysed reaction is cutin + H2O = cutin monomers.. It carries out the reaction (ethylene terephthalate)(n) + H2O = (ethylene terephthalate)(n-1) + 4-[(2-hydroxyethoxy)carbonyl]benzoate + H(+). Activated by magnesium ions. Activated by calcium ions. In terms of biological role, catalyzes the hydrolysis of cutin, a polyester that forms the structure of plant cuticle. Shows esterase activity towards p-nitrophenol-linked aliphatic esters (pNP-aliphatic esters). Capable of degrading the plastic poly(ethylene terephthalate) (PET), the most abundant polyester plastic in the world. The protein is Cutinase cut1 of Thermobifida fusca (Thermomonospora fusca).